A 101-amino-acid polypeptide reads, in one-letter code: Urease subunit beta (101 aa).

It belongs to the urease beta subunit family. In terms of assembly, heterotrimer of UreA (gamma), UreB (beta) and UreC (alpha) subunits. Three heterotrimers associate to form the active enzyme.

Its subcellular location is the cytoplasm. It catalyses the reaction urea + 2 H2O + H(+) = hydrogencarbonate + 2 NH4(+). Its pathway is nitrogen metabolism; urea degradation; CO(2) and NH(3) from urea (urease route): step 1/1. The chain is Urease subunit beta from Albidiferax ferrireducens (strain ATCC BAA-621 / DSM 15236 / T118) (Rhodoferax ferrireducens).